Reading from the N-terminus, the 556-residue chain is Acetyl-coenzyme A thioesterase (556 aa).

Positions 6-118 (APGEVLMSQA…FSTFVVKPLG (113 aa)) constitute a HotDog ACOT-type 1 domain. Lys-34 carries the N6-succinyllysine modification. CoA contacts are provided by residues 54–56 (TAS) and 83–85 (STS). N6-succinyllysine is present on Lys-97. Arg-145 serves as a coordination point for CoA. Lys-160 and Lys-229 each carry N6-succinyllysine. The HotDog ACOT-type 2 domain occupies 180–295 (MATSVQSIEL…FLIYNAVDDQ (116 aa)). 235 to 237 (KFR) lines the CoA pocket. The START domain occupies 341–550 (GTQWDISKKG…IKFIENATHD (210 aa)).

As to quaternary structure, homodimer or homotetramer.

It is found in the cytoplasm. Its subcellular location is the cytosol. It catalyses the reaction acetyl-CoA + H2O = acetate + CoA + H(+). The catalysed reaction is butanoyl-CoA + H2O = butanoate + CoA + H(+). It carries out the reaction hexanoyl-CoA + H2O = hexanoate + CoA + H(+). Its pathway is lipid metabolism; fatty acid metabolism. With respect to regulation, allosterically regulated by ATP (activator) and ADP (inhibitor). Cold labile, it dissociates into inactive monomers at low temperature. Functionally, catalyzes the hydrolysis of acyl-CoAs into free fatty acids and coenzyme A (CoASH), regulating their respective intracellular levels. Preferentially hydrolyzes acetyl-CoA. The polypeptide is Acetyl-coenzyme A thioesterase (Acot12) (Rattus norvegicus (Rat)).